The sequence spans 413 residues: High zinc activated nuclear receptor protein (413 aa).

The segment at residues 11–86 is a DNA-binding region (nuclear receptor); sequence LGNCKICLQR…EGMKIELVQL (76 aa). 2 consecutive NR C4-type zinc fingers follow at residues 14 to 34 and 50 to 69; these read CKIC…CRAC and CKEK…CRSC. The required for zinc-binding stretch occupies residues 101 to 412; it reads SIDPLFTPNV…TSQCIVHTKN (312 aa). Residues 135–396 enclose the NR LBD domain; that stretch reads QMTSGYAMFL…VCCKNFKEDA (262 aa).

It belongs to the nuclear hormone receptor family. Weakly expressed in intestinal cells in the absence of zinc supplementation. Upon zinc supplementation, accumulates in alimentary tract cells, and it is mainly expressed in the intestine.

The protein resides in the nucleus. The protein localises to the cytoplasm. In terms of biological role, nuclear receptor transcription factor that binds to DNA enhancer elements to promote the transcription of genes required to maintain micronutrient homeostasis. Direct binding to its ligand zinc allows for nuclear accumulation and activation, which thereby induces the transcription of genes required to promote the storage and detoxification of excess dietary zinc. This in turn, allows for internal zinc levels to be detected and regulated. The polypeptide is High zinc activated nuclear receptor protein (Caenorhabditis elegans).